We begin with the raw amino-acid sequence, 837 residues long: MEPAAGGPGPLIVNNKQPQPPPPPPPATAQPPPGAPRAAAGLLPGGKAREFNRNQRKDSEGYSESPDLEFEYADTDKWAAELSELYSYTEGPEFLMNRKCFEEDFRIHVTDKKWTELDTNQHRTHAMRLLDGLEVTAREKRLKVARAILYVAQGTFGECSSEAEVQSWMRYNIFLLLEVGTFNALVELLNMEIDNGAACSSAVRKPAISLADSTDLRVLLNIMYLIVETVHQECEGDKAEWSTMRQTFRAELGSPLYNNEPFAIMLFGMVTKFCSGHAPHFPMKKVLLLLWKTVLCTLGGFEELQSMKAEKRSILGLPPLPEDSIKVIRNMRAASPPASASDSIEQQQKRGRREHKALIKQDNLDAFNERDPYKADDSREEEEENDDDNSLEGETFPLERDEVMPPPLQHPQTDRLTCPKGLPWAPKVREKDIEMFLESSRSKFMGYTLGSDTNTVVGLPRPIHESIKTLKQHKYTSIAEVQAQMEEEYLRSPLSGGEEEVEQVPAETLYQGLLPSLPQYMIALLKILLAAAPTSKAKTDSINILADVLPEEMPTTVLQSMKLGVDVNRHKEVIVKAISAVLLLLLKHFKLNHVYQFEYMAQHLVFANCIPLILKFFNQNIMSYITAKNSISVLDYPHCVVHELPELTAESLEAGDSNQFCWRNLFSCINLLRILNKLTKWKHSRTMMLVVFKSAPILKRALKVKQAMMQLYVLKLLKVQTKYLGRQWRKSNMKTMSAIYQKVRHRLNDDWAYGNDLDARPWDFQAEECALRANIERFNARRYDRAHSNPDFLPVDNCLQSVLGQRVDLPEDFQMNYDLWLEREVFSKPISWEELLQ.

Methionine 1 carries the post-translational modification N-acetylmethionine. Disordered regions lie at residues 1–67 and 333–423; these read MEPA…ESPD and AASP…KGLP. Over residues 18-35 the composition is skewed to pro residues; that stretch reads PQPPPPPPPATAQPPPGA. A compositionally biased stretch (low complexity) spans 36–46; sequence PRAAAGLLPGG. Basic and acidic residues predominate over residues 47–60; that stretch reads KAREFNRNQRKDSE. Serine 59, serine 335, and serine 339 each carry phosphoserine. Low complexity predominate over residues 333-343; the sequence is AASPPASASDS. Positions 356 to 377 are enriched in basic and acidic residues; sequence KALIKQDNLDAFNERDPYKADD. The segment covering 378–391 has biased composition (acidic residues); sequence SREEEEENDDDNSL. At serine 788 the chain carries Phosphoserine. The interval 796-837 is required for STRIPAK core complex formation; sequence DNCLQSVLGQRVDLPEDFQMNYDLWLEREVFSKPISWEELLQ.

The protein belongs to the STRIP family. In terms of assembly, part of the core of STRIPAK complexes composed of PP2A catalytic and scaffolding subunits, the striatins (PP2A regulatory subunits), the striatin-associated proteins MOB4, STRIP1 and STRIP2, PDCD10 and members of the STE20 kinases, such as STK24 and STK26. The STRIPAK complex can be extended by adapter proteins such as SLMAP:SIKE1, CTTNBP2 or CTTNBP2NL. Interacts with CDC42BPB. Interacts with CTTNBP2NL.

It is found in the cytoplasm. In terms of biological role, plays a role in the regulation of cell morphology and cytoskeletal organization. Required in the cortical actin filament dynamics and cell shape. Part of the striatin-interacting phosphatase and kinase (STRIPAK) complexes. STRIPAK complexes have critical roles in protein (de)phosphorylation and are regulators of multiple signaling pathways including Hippo, MAPK, nuclear receptor and cytoskeleton remodeling. Different types of STRIPAK complexes are involved in a variety of biological processes such as cell growth, differentiation, apoptosis, metabolism and immune regulation. In Pongo abelii (Sumatran orangutan), this protein is Striatin-interacting protein 1 (STRIP1).